We begin with the raw amino-acid sequence, 168 residues long: MAALDIQISVEAEGWSSEENLAAFATKVLNAAVDFLKREEEQPFPKMPVELSLVFTDDENIREINAEWRDKDKATNVLSFPAFPLEPGGMPGPMLGDIVIARETVEREALELDKSFEDHLTHLLVHGFLHLFGYDHMDEEEAEEMESLETRILAVLGLSDPYAGQEPL.

Zn(2+) contacts are provided by His-126, His-130, and His-136.

This sequence belongs to the endoribonuclease YbeY family. The cofactor is Zn(2+).

The protein localises to the cytoplasm. Single strand-specific metallo-endoribonuclease involved in late-stage 70S ribosome quality control and in maturation of the 3' terminus of the 16S rRNA. The sequence is that of Endoribonuclease YbeY from Agrobacterium fabrum (strain C58 / ATCC 33970) (Agrobacterium tumefaciens (strain C58)).